A 378-amino-acid polypeptide reads, in one-letter code: Mevalonate kinase (378 aa).

ATP contacts are provided by residues Lys-10, Ser-138, and 143–149 (GSGLGSS). The Mg(2+) site is built by Ser-149 and Glu-193. The active-site Proton acceptor is the Asp-204.

Belongs to the GHMP kinase family. Mevalonate kinase subfamily. Requires Mg(2+) as cofactor.

The protein resides in the cytoplasm. The catalysed reaction is (R)-mevalonate + ATP = (R)-5-phosphomevalonate + ADP + H(+). It participates in isoprenoid biosynthesis; isopentenyl diphosphate biosynthesis via mevalonate pathway; isopentenyl diphosphate from (R)-mevalonate: step 1/3. With respect to regulation, its activity is inhibited in vitro by geranyl pyrophosphate (GPP) and farnesyl pyrophosphate (FPP) that bind competitively at the ATP-binding site on the enzyme. Its function is as follows. Catalyzes the phosphorylation of mevalonate to mevalonate 5-phosphate, a key step in isoprenoid and cholesterol biosynthesis. The polypeptide is Mevalonate kinase (Arabidopsis thaliana (Mouse-ear cress)).